Reading from the N-terminus, the 84-residue chain is Putative membrane protein insertion efficiency factor (84 aa).

The disordered stretch occupies residues 63 to 84; that stretch reads WGGSGYDPVPGADPEHDRRPRG. A compositionally biased stretch (basic and acidic residues) spans 75-84; sequence DPEHDRRPRG.

The protein belongs to the UPF0161 family.

The protein localises to the cell inner membrane. Functionally, could be involved in insertion of integral membrane proteins into the membrane. This is Putative membrane protein insertion efficiency factor from Cereibacter sphaeroides (strain ATCC 17025 / ATH 2.4.3) (Rhodobacter sphaeroides).